The following is a 510-amino-acid chain: Histidine ammonia-lyase (510 aa).

The 5-imidazolinone (Ala-Gly) cross-link spans A143–G145. S144 carries the 2,3-didehydroalanine (Ser) modification.

Belongs to the PAL/histidase family. In terms of processing, contains an active site 4-methylidene-imidazol-5-one (MIO), which is formed autocatalytically by cyclization and dehydration of residues Ala-Ser-Gly.

The protein localises to the cytoplasm. The catalysed reaction is L-histidine = trans-urocanate + NH4(+). It participates in amino-acid degradation; L-histidine degradation into L-glutamate; N-formimidoyl-L-glutamate from L-histidine: step 1/3. This is Histidine ammonia-lyase from Shewanella woodyi (strain ATCC 51908 / MS32).